Here is a 201-residue protein sequence, read N- to C-terminus: MAHGPRYRVPFRRRREGKTNYHKRLKLLKSKKPRLVVRKTLNHHIAQIVVYDPKGDKTLVSAHTMELMRDFGWKGHGGNTPSAYLLGLLIGYKAKQAGIEEAILDIGLHPPTRGSSIFAVLKGAVDAGLNVPHSEEIYPEDYRINGEHIANYAKALKEEDEALYRKQFSGYLVKGLEPEKLPEHFEEVKAKIIEKFEGARE.

This sequence belongs to the universal ribosomal protein uL18 family. In terms of assembly, part of the 50S ribosomal subunit. Contacts the 5S and 23S rRNAs.

Its function is as follows. This is one of the proteins that bind and probably mediate the attachment of the 5S RNA into the large ribosomal subunit, where it forms part of the central protuberance. This is Large ribosomal subunit protein uL18 from Thermococcus kodakarensis (strain ATCC BAA-918 / JCM 12380 / KOD1) (Pyrococcus kodakaraensis (strain KOD1)).